Consider the following 72-residue polypeptide: Conotoxin VnMKLT2-021 (72 aa).

A signal peptide spans 1–22 (MKLTCVLIVAVLFLTACQLTTA). The propeptide occupies 23 to 45 (ASYARSERQHPDLGSSDQNSKLT). Cystine bridges form between Cys-48-Cys-62, Cys-55-Cys-66, and Cys-61-Cys-71.

Belongs to the conotoxin O1 superfamily. Expressed by the venom duct.

It localises to the secreted. This is Conotoxin VnMKLT2-021 from Conus ventricosus (Mediterranean cone).